The chain runs to 189 residues: Peptidyl-tRNA hydrolase (189 aa).

Tyr-15 is a tRNA binding site. The active-site Proton acceptor is His-20. 3 residues coordinate tRNA: Tyr-65, Asn-67, and Asn-113.

It belongs to the PTH family. Monomer.

The protein resides in the cytoplasm. The catalysed reaction is an N-acyl-L-alpha-aminoacyl-tRNA + H2O = an N-acyl-L-amino acid + a tRNA + H(+). Hydrolyzes ribosome-free peptidyl-tRNAs (with 1 or more amino acids incorporated), which drop off the ribosome during protein synthesis, or as a result of ribosome stalling. Its function is as follows. Catalyzes the release of premature peptidyl moieties from peptidyl-tRNA molecules trapped in stalled 50S ribosomal subunits, and thus maintains levels of free tRNAs and 50S ribosomes. The polypeptide is Peptidyl-tRNA hydrolase (Caldicellulosiruptor bescii (strain ATCC BAA-1888 / DSM 6725 / KCTC 15123 / Z-1320) (Anaerocellum thermophilum)).